The sequence spans 56 residues: UPF0391 membrane protein Jann_3570 (56 aa).

2 helical membrane-spanning segments follow: residues 4-24 (WAVT…GGIA) and 29-48 (GIAQ…SLVA).

This sequence belongs to the UPF0391 family.

The protein resides in the cell membrane. The chain is UPF0391 membrane protein Jann_3570 from Jannaschia sp. (strain CCS1).